The primary structure comprises 374 residues: Golgi-associated kinase 1B (374 aa).

At 1–38 the chain is on the cytoplasmic side; sequence MSPDRTGRGSSSSSSSLKRLVCKSFVRAWGRRRPNLRR. The helical; Signal-anchor for type II membrane protein transmembrane segment at 39-61 threads the bilayer; that stretch reads AVLLICTASAIYGIVIASQVLRG. Residues 62 to 374 lie on the Extracellular side of the membrane; it reads STHPGKALRK…LLQVYTRLDR (313 aa). The segment covering 136–146 has biased composition (basic residues); sequence VRPKKRRKYGA. The tract at residues 136-177 is disordered; the sequence is VRPKKRRKYGARRPGVVQDTESKKDTLWSKVPNSQHKSQAQS. Positions 166 to 177 are enriched in polar residues; it reads VPNSQHKSQAQS. N-linked (GlcNAc...) asparagine glycosylation is found at Asn281 and Asn314.

Belongs to the GASK family.

The protein resides in the golgi apparatus membrane. This chain is Golgi-associated kinase 1B, found in Xenopus laevis (African clawed frog).